A 200-amino-acid chain; its full sequence is Adenylate kinase (200 aa).

10-15 contributes to the ATP binding site; it reads GAGKGT. The interval 30–59 is NMP; sequence STGDMLRAAVAAETPVGLEAKAIMESGGLV. AMP is bound by residues Thr-31, Arg-36, 57 to 59, 85 to 88, and Gln-92; these read GLV and GFPR. The LID stretch occupies residues 126 to 142; the sequence is KRAEETAARGQPVRKDD. Arg-127 contributes to the ATP binding site. The AMP site is built by Arg-139 and Arg-150. Lys-178 contacts ATP.

Belongs to the adenylate kinase family. In terms of assembly, monomer.

Its subcellular location is the cytoplasm. It catalyses the reaction AMP + ATP = 2 ADP. It functions in the pathway purine metabolism; AMP biosynthesis via salvage pathway; AMP from ADP: step 1/1. Catalyzes the reversible transfer of the terminal phosphate group between ATP and AMP. Plays an important role in cellular energy homeostasis and in adenine nucleotide metabolism. In Methylorubrum extorquens (strain PA1) (Methylobacterium extorquens), this protein is Adenylate kinase.